We begin with the raw amino-acid sequence, 446 residues long: Amino-acid acetyltransferase (446 aa).

The N-acetyltransferase domain maps to 299 to 438; the sequence is EQVRDAEIDD…QKLYNFQRKS (140 aa).

The protein belongs to the acetyltransferase family. ArgA subfamily.

Its subcellular location is the cytoplasm. It carries out the reaction L-glutamate + acetyl-CoA = N-acetyl-L-glutamate + CoA + H(+). Its pathway is amino-acid biosynthesis; L-arginine biosynthesis; N(2)-acetyl-L-ornithine from L-glutamate: step 1/4. The polypeptide is Amino-acid acetyltransferase (Aliivibrio fischeri (strain ATCC 700601 / ES114) (Vibrio fischeri)).